The primary structure comprises 693 residues: MTGMQHGLFSPPAPAGLAEKVEALRATIRRYDYEYYVLNAPSVPDSEYDRVFRELKALEDAHPELVTPDSPTQRVGGAAMAELMPVRHHVPMLSIETETDTTPQGAYNFDARVRKKLGLLPEDGPIEYAAELKFDGLAMSLRYEHGLLVQAATRGDGEVGEDVTHNIRTMRQIPLQLHGEAPEVLEVRGEVYMSRPDFERYNARQREHGKPTLVNPRNGAAGSIRQLDPRLAAQRPLSFFAYGLGETKGWQVPLTHAQVLDALKALGLPVCNERAVGMGAEALAAFHQAISAKRDQLPYDIDGVVYKVNRLDLQRELGFRSREPNWAVAHKFPAQEEMTVLEHIDVQVGRTGAITPVARLKPVFVGGVTVTNATLHNQDEIDRKDVRIGDTVVVRRAGDVIPEVVSVIKERRPAGSQPYILLDAIGGLCPVCGSHAVRLPEEAAVRCTGGLFCAAQRKQAILHFASRRAMDIEGLGEKLVDQLVDQNMVETLADLYDPGKINLETLSGLDRMAMKSAQNLLDALQKSKQATLNRFIYALGIRNVGEATAKDLARHFGRLDALQAADVDTLQQVPDVGPVVARSIAEFFAEEHNREVIRKLRDAGIHWSETDGQPASSSKLEGKTFVLTGTLPTMSRDEAKEKIEAAGGKVSGSVSKKTSYVVAGSDAGSKLAKAQELGLAILDEEGLLSLLAE.

NAD(+) is bound by residues 45-49 (DSEYD), 94-95 (SI), and Glu-131. Lys-133 acts as the N6-AMP-lysine intermediate in catalysis. 4 residues coordinate NAD(+): Arg-154, Glu-190, Lys-307, and Lys-331. Cys-429, Cys-432, Cys-447, and Cys-453 together coordinate Zn(2+). The BRCT domain occupies 615–693 (ASSSKLEGKT…EEGLLSLLAE (79 aa)).

The protein belongs to the NAD-dependent DNA ligase family. LigA subfamily. Mg(2+) is required as a cofactor. Mn(2+) serves as cofactor.

The catalysed reaction is NAD(+) + (deoxyribonucleotide)n-3'-hydroxyl + 5'-phospho-(deoxyribonucleotide)m = (deoxyribonucleotide)n+m + AMP + beta-nicotinamide D-nucleotide.. In terms of biological role, DNA ligase that catalyzes the formation of phosphodiester linkages between 5'-phosphoryl and 3'-hydroxyl groups in double-stranded DNA using NAD as a coenzyme and as the energy source for the reaction. It is essential for DNA replication and repair of damaged DNA. In Methylobacillus flagellatus (strain ATCC 51484 / DSM 6875 / VKM B-1610 / KT), this protein is DNA ligase.